A 111-amino-acid polypeptide reads, in one-letter code: ATP-dependent Clp protease adapter protein ClpS (111 aa).

Belongs to the ClpS family. In terms of assembly, binds to the N-terminal domain of the chaperone ClpA.

In terms of biological role, involved in the modulation of the specificity of the ClpAP-mediated ATP-dependent protein degradation. This chain is ATP-dependent Clp protease adapter protein ClpS, found in Corynebacterium aurimucosum (strain ATCC 700975 / DSM 44827 / CIP 107346 / CN-1) (Corynebacterium nigricans).